The following is a 194-amino-acid chain: Ubiquitin-conjugating enzyme E2 T (194 aa).

Positions Q2–I152 constitute a UBC core domain. C86 functions as the Glycyl thioester intermediate in the catalytic mechanism. Basic and acidic residues-rich tracts occupy residues C158–N170 and N185–L194. Positions C158 to L194 are disordered.

It belongs to the ubiquitin-conjugating enzyme family.

It localises to the nucleus. It catalyses the reaction S-ubiquitinyl-[E1 ubiquitin-activating enzyme]-L-cysteine + [E2 ubiquitin-conjugating enzyme]-L-cysteine = [E1 ubiquitin-activating enzyme]-L-cysteine + S-ubiquitinyl-[E2 ubiquitin-conjugating enzyme]-L-cysteine.. It participates in protein modification; protein ubiquitination. Functionally, accepts ubiquitin from the E1 complex and catalyzes its covalent attachment to other proteins. Catalyzes monoubiquitination. Involved in DNA repair. In Danio rerio (Zebrafish), this protein is Ubiquitin-conjugating enzyme E2 T (ube2t).